The primary structure comprises 216 residues: MVDMTQLQAIYGGTFDPVHYGHLKPVEILANQIGLSKVIIMPNNVPPHRPQPEATSAQRVHMLKLAIADKPLFTLDERELQRDTPSWTADTLQAWRQEQGAEKPLAFIIGQDSLLTFPTWHRYETILDNVHLIVCRRPGYPLTMAHDADQQWLDRHLTHDVERLHNRPAGAIYLAETPWFDISATIIRQRLERGESCAEMLPATVLDYIREQGLYC.

Belongs to the NadD family.

The enzyme catalyses nicotinate beta-D-ribonucleotide + ATP + H(+) = deamido-NAD(+) + diphosphate. The protein operates within cofactor biosynthesis; NAD(+) biosynthesis; deamido-NAD(+) from nicotinate D-ribonucleotide: step 1/1. In terms of biological role, catalyzes the reversible adenylation of nicotinate mononucleotide (NaMN) to nicotinic acid adenine dinucleotide (NaAD). This is Probable nicotinate-nucleotide adenylyltransferase from Klebsiella pneumoniae (strain 342).